Here is a 229-residue protein sequence, read N- to C-terminus: Ras-related protein Rab-33B (229 aa).

Residues N43, V44, G45, K46, T47, C48, T62, and T65 each coordinate GTP. Residue T47 participates in Mg(2+) binding. A Switch 1 motif is present at residues 56-68; it reads GRFPDRTEATIGV. Positions 65 and 88 each coordinate Mg(2+). The short motif at 89–108 is the Switch 2 element; the sequence is TAGQERFRKSMVQHYYRNVH. Residues G91, N148, K149, D151, A179, and K180 each contribute to the GTP site. 2 S-geranylgeranyl cysteine lipidation sites follow: C227 and C229. C229 bears the Cysteine methyl ester mark.

It belongs to the small GTPase superfamily. Rab family. As to quaternary structure, interacts (GTP- and GDP-bound forms) with ATG16L1; the complex consists of a tetramer where two RAB33B molecules bind independently one molecule of the ATG16L1 homodimer; the interaction promotes ATG12-ATG5-ATG16L1 complex recruitment to phagophores. Interacts with ATG16L2; however interaction is approximately hundred times lower than for ATG16L1. Interacts with RIC1 (via C-terminus domain); the interaction is direct with a preference for RAB33B-GTP. Interacts with RGP1. Requires Mg(2+) as cofactor. In terms of processing, prenylated.

The protein localises to the golgi apparatus membrane. It localises to the golgi apparatus. Its subcellular location is the cis-Golgi network. It is found in the preautophagosomal structure membrane. The enzyme catalyses GTP + H2O = GDP + phosphate + H(+). With respect to regulation, regulated by guanine nucleotide exchange factors (GEFs) which promote the exchange of bound GDP for free GTP. Regulated by GTPase activating proteins (GAPs) such as SGSM2 which increase the GTP hydrolysis activity. Inhibited by GDP dissociation inhibitors (GDIs). Its function is as follows. The small GTPases Rab are key regulators of intracellular membrane trafficking, from the formation of transport vesicles to their fusion with membranes. Rabs cycle between an inactive GDP-bound form and an active GTP-bound form that is able to recruit to membranes different sets of downstream effectors directly responsible for vesicle formation, movement, tethering and fusion. RAB33B acts, in coordination with RAB6A, to regulate intra-Golgi retrograde trafficking. Participates in autophagosome formation by recruiting the ATG12-ATG5-ATG16L1 complex to phagophores, probably in a nucleotide-independent manner. The chain is Ras-related protein Rab-33B from Homo sapiens (Human).